We begin with the raw amino-acid sequence, 306 residues long: tRNA pseudouridine synthase B (306 aa).

Catalysis depends on Asp48, which acts as the Nucleophile.

This sequence belongs to the pseudouridine synthase TruB family. Type 1 subfamily.

The enzyme catalyses uridine(55) in tRNA = pseudouridine(55) in tRNA. Responsible for synthesis of pseudouridine from uracil-55 in the psi GC loop of transfer RNAs. This Haemophilus influenzae (strain 86-028NP) protein is tRNA pseudouridine synthase B.